The following is a 360-amino-acid chain: Peptide chain release factor 1 (360 aa).

Q235 is subject to N5-methylglutamine. The segment covering 281–307 has biased composition (basic and acidic residues); sequence ERQRADSERSADRRNQVGSGDRSERIR. Positions 281 to 310 are disordered; the sequence is ERQRADSERSADRRNQVGSGDRSERIRTYN.

The protein belongs to the prokaryotic/mitochondrial release factor family. In terms of processing, methylated by PrmC. Methylation increases the termination efficiency of RF1.

It localises to the cytoplasm. In terms of biological role, peptide chain release factor 1 directs the termination of translation in response to the peptide chain termination codons UAG and UAA. In Sinorhizobium medicae (strain WSM419) (Ensifer medicae), this protein is Peptide chain release factor 1.